The chain runs to 92 residues: Small ribosomal subunit protein uS19c (92 aa).

It belongs to the universal ribosomal protein uS19 family.

It localises to the plastid. The protein localises to the chloroplast. Protein S19 forms a complex with S13 that binds strongly to the 16S ribosomal RNA. The protein is Small ribosomal subunit protein uS19c of Pyropia yezoensis (Susabi-nori).